Here is a 94-residue protein sequence, read N- to C-terminus: Acylphosphatase (94 aa).

Positions 5–94 constitute an Acylphosphatase-like domain; it reads RLTAFVHGHV…PRDVEGFVER (90 aa). Active-site residues include Arg-20 and Asn-38.

Belongs to the acylphosphatase family.

The enzyme catalyses an acyl phosphate + H2O = a carboxylate + phosphate + H(+). In Corynebacterium glutamicum (strain R), this protein is Acylphosphatase (acyP).